Reading from the N-terminus, the 238-residue chain is MSTPAYKRILLKLSGEALMGDDSYGINRATISRIVEEIKEVVDLGVEVAVVIGGGNIFRGVAPAAEGMDRATADYMGMLATVMNALALQDAMRHIGLVSRVQSALNIEQVAEPYIRGKAIRYLEEGRVVIFGAGTGNPFFTTDTAAALRGMEINAEIVLKATKVDGVYTDDPKRNPEAMRYKTLTFDEAIVKNLKVMDATALTLCRDQKLPISVFSIFRQGALKRVVLGEDEGTRVLP.

12-15 (KLSG) contacts ATP. Glycine 54 is a UMP binding site. ATP is bound by residues glycine 55 and arginine 59. UMP is bound by residues aspartate 74 and 135–142 (TGNPFFTT). ATP contacts are provided by threonine 162, tyrosine 168, and aspartate 171.

The protein belongs to the UMP kinase family. In terms of assembly, homohexamer.

Its subcellular location is the cytoplasm. It carries out the reaction UMP + ATP = UDP + ADP. It functions in the pathway pyrimidine metabolism; CTP biosynthesis via de novo pathway; UDP from UMP (UMPK route): step 1/1. With respect to regulation, inhibited by UTP. Its function is as follows. Catalyzes the reversible phosphorylation of UMP to UDP. This Methylobacillus flagellatus (strain ATCC 51484 / DSM 6875 / VKM B-1610 / KT) protein is Uridylate kinase.